The primary structure comprises 375 residues: Tryptophan dimethylallyltransferase (375 aa).

L-tryptophan is bound by residues 83–84 and Glu-92; that span reads IL. Substrate is bound by residues Arg-103, Lys-189, and Tyr-191. Residues Tyr-193 and Arg-246 each coordinate L-tryptophan. Residues Arg-259, Lys-261, Tyr-263, Gln-345, and Tyr-347 each coordinate substrate.

The protein belongs to the tryptophan dimethylallyltransferase family. Homodimer.

It catalyses the reaction L-tryptophan + dimethylallyl diphosphate = 4-(3-methylbut-2-enyl)-L-tryptophan + diphosphate. The protein operates within alkaloid biosynthesis; ergot alkaloid biosynthesis. Functionally, tryptophan dimethylallyltransferase; part of the gene cluster that mediates the biosynthesis of fungal ergot alkaloid. DmaW catalyzes the first step of ergot alkaloid biosynthesis by condensing dimethylallyl diphosphate (DMAP) and tryptophan to form 4-dimethylallyl-L-tryptophan. The second step is catalyzed by the methyltransferase easF that methylates 4-dimethylallyl-L-tryptophan in the presence of S-adenosyl-L-methionine, resulting in the formation of 4-dimethylallyl-L-abrine. The catalase easC and the FAD-dependent oxidoreductase easE then transform 4-dimethylallyl-L-abrine to chanoclavine-I which is further oxidized by easD in the presence of NAD(+), resulting in the formation of chanoclavine-I aldehyde. Chanoclavine-I aldehyde is the precursor of ergoamides and ergopeptines in Clavicipitaceae, and clavine-type alcaloids such as fumiclavine in Trichocomaceae. However, the metabolites downstream of chanoclavine-I aldehyde in Arthrodermataceae have not been identified yet. The protein is Tryptophan dimethylallyltransferase of Trichophyton verrucosum (strain HKI 0517).